Consider the following 236-residue polypeptide: Probable 2-phosphosulfolactate phosphatase (236 aa).

This sequence belongs to the ComB family. Mg(2+) serves as cofactor.

It carries out the reaction (2R)-O-phospho-3-sulfolactate + H2O = (2R)-3-sulfolactate + phosphate. The polypeptide is Probable 2-phosphosulfolactate phosphatase (Gloeobacter violaceus (strain ATCC 29082 / PCC 7421)).